The sequence spans 835 residues: MEGENTTDPPYTTAASSGQSIFVRPPPIAPVLATTSNFSQSELKELHSMSIASTGFVSQSVPYSVTAQWGTNAAASSNVNPIPQASPMLANAPFGRPGTLAPPGLMTSPPAFPGSNPFSTTPRPGMSAGPAQMNPGIHPHMYPPYHSLPGTPQGMWLQPPSMGGIPRAPFLSHPTTFPGSYPFPVRGISPNLPYSGSHPLGASPMGSVGNVHALPGRQPDISPGRKTEELSGIDDRAGSQLVGNRLDAWTAHKSEAGVLYYYNSVTGQSTYEKPPGFGGEPDKVPVQPIPVSMESLPGTDWALVSTNDGKKYYYNNKTKVSSWQIPAEVKDFGKKLEERAMESVASVPSADLTEKGSDLTSLSAPAISNGGRDAASLKTTNFGSSALDLVKKKLHDSGMPVSSTITSEANSGKTTEVTPSGESGNSTGKVKDAPGAGALSDSSSDSEDEDSGPSKEECSKQFKEMLKERGIAPFSKWEKELPKIIFDPRFKAIPSHSVRRSLFEQYVKTRAEEERREKRAAHKAAIEGFRQLLDDASTDIDQHTDYRAFKKKWGNDLRFEAIERKEREGLLNERVLSLKRSAEQKAQEIRAAAASDFKTMLREREISINSHWSKVKDSLRNEPRYRSVAHEDREVFYYEYIAELKAAQRGDDHEMKARDEEDKLRERERELRKRKEREVQEVERVRQKIRRKEASSSYQALLVEKIRDPEASWTESKPILERDPQKRASNPDLEPADKEKLFRDHVKSLYERCVHDFKALLAEALSSEAATLQTEDGKTALNSWSTAKQVLKPDIRYSKMPRQDREVVWRRYVEDISRKQRHENYQEEKQRDYKT.

Over residues 1–20 (MEGENTTDPPYTTAASSGQS) the composition is skewed to polar residues. Residues 1–22 (MEGENTTDPPYTTAASSGQSIF) form a disordered region. WW domains lie at 243-276 (GNRLDAWTAHKSEAGVLYYYNSVTGQSTYEKPPG) and 295-328 (SLPGTDWALVSTNDGKKYYYNNKTKVSSWQIPAE). Positions 397–459 (SGMPVSSTIT…DSGPSKEECS (63 aa)) are disordered. The span at 400–428 (PVSSTITSEANSGKTTEVTPSGESGNSTG) shows a compositional bias: polar residues. 3 FF domains span residues 455–509 (KEEC…YVKT), 519–577 (RAAH…RVLS), and 590–643 (RAAA…YIAE). Disordered stretches follow at residues 649 to 677 (RGDDHEMKARDEEDKLRERERELRKRKER) and 714 to 738 (TESKPILERDPQKRASNPDLEPADK). FF domains lie at 691-748 (RKEA…HVKS) and 750-815 (YERC…YVED).

It belongs to the PRPF40 family. In terms of assembly, interacts (via the WW domains) with the phosphorylated C-terminal domain of NRPB1 (via CTD domain). As to expression, expressed in roots, shoots, rosette leaves, cauline leaves, stems and flowers.

It localises to the nucleus. Functionally, binds the phosphorylated C-terminal domain (CTD) of the largest subunit of RNA polymerase II and functions as a scaffold for RNA processing machineries. May be involved in pre-mRNA splicing. This is Pre-mRNA-processing protein 40C from Arabidopsis thaliana (Mouse-ear cress).